The chain runs to 262 residues: Small ribosomal subunit protein eS4 (262 aa).

The S4 RNA-binding domain occupies 42–105 (LPLXVFLRNR…NEHFRLAYDV (64 aa)).

It belongs to the eukaryotic ribosomal protein eS4 family.

This Candida albicans (Yeast) protein is Small ribosomal subunit protein eS4 (RPS4).